The following is a 504-amino-acid chain: Sugar transport protein 14 (504 aa).

The Cytoplasmic segment spans residues 1–25 (MAGGALTDEGGLKRAHLYEHRITSY). Transmembrane regions (helical) follow at residues 26–46 (FIFA…DLGV), 84–104 (ILTL…FGAS), 121–141 (VSFF…MLIL), 144–164 (IFLG…LSEM), 171–191 (GTVN…ANLI), 205–225 (LSLG…LVLP), 286–308 (LVIG…ILFY), 315–337 (SLGF…LVVA), 352–372 (FLLL…GVTL), 382–402 (LPKS…LAYG), 428–448 (VVVC…LVSL), and 454–474 (GIFL…YFLL). Topologically, residues 475 to 504 (PETKQVPIEEVYLLWRQHWLWKKYVEDVDE) are cytoplasmic.

The protein belongs to the major facilitator superfamily. Sugar transporter (TC 2.A.1.1) family.

It localises to the membrane. Its function is as follows. Mediates an active uptake of hexoses, probably by sugar/hydrogen symport. The polypeptide is Sugar transport protein 14 (STP14) (Arabidopsis thaliana (Mouse-ear cress)).